Reading from the N-terminus, the 375-residue chain is MAAIKYRLIKKDSRTNARLGILETPHGIIETPVFMPVGTQATVKSMTPEELKEIGATIILSNTYHLYLRPGHKIIEKAGGLHKFMNWDRAILTDSGGFQVFSLNSLRKITEDGVEFRSHIDGSRHFFTPEKVIEIQNALGSDIMMSFDECAPYPADYDYVKKSMELTIKWAERGKRAHKNTEKQALFGIVQGGTYEDLRKECAQRLVDMDFPGYSIGGLSVGEPKNVMYDIVDLTTEYLPEDKPRYLMGVGSPDDLIEGVIRGVDMFDCVLPTRIARNGTVFTSKGKLIVRDAPYAEDFSPLDEECDCYTCRNYSRAYIRHLFKANEILAARLATIHNLYFLIKLMERIREAIRQDRLLEFKKQFFKKYGYKEEY.

Catalysis depends on Asp-94, which acts as the Proton acceptor. Substrate is bound by residues 94–98, Asp-148, Gln-191, and Gly-218; that span reads DSGGF. The RNA binding stretch occupies residues 249–255; it reads GVGSPDD. The active-site Nucleophile is Asp-268. The interval 273 to 277 is RNA binding; important for wobble base 34 recognition; that stretch reads TRIAR. Zn(2+)-binding residues include Cys-306, Cys-308, Cys-311, and His-337.

It belongs to the queuine tRNA-ribosyltransferase family. Homodimer. Within each dimer, one monomer is responsible for RNA recognition and catalysis, while the other monomer binds to the replacement base PreQ1. Zn(2+) serves as cofactor.

It carries out the reaction 7-aminomethyl-7-carbaguanine + guanosine(34) in tRNA = 7-aminomethyl-7-carbaguanosine(34) in tRNA + guanine. It functions in the pathway tRNA modification; tRNA-queuosine biosynthesis. Its function is as follows. Catalyzes the base-exchange of a guanine (G) residue with the queuine precursor 7-aminomethyl-7-deazaguanine (PreQ1) at position 34 (anticodon wobble position) in tRNAs with GU(N) anticodons (tRNA-Asp, -Asn, -His and -Tyr). Catalysis occurs through a double-displacement mechanism. The nucleophile active site attacks the C1' of nucleotide 34 to detach the guanine base from the RNA, forming a covalent enzyme-RNA intermediate. The proton acceptor active site deprotonates the incoming PreQ1, allowing a nucleophilic attack on the C1' of the ribose to form the product. After dissociation, two additional enzymatic reactions on the tRNA convert PreQ1 to queuine (Q), resulting in the hypermodified nucleoside queuosine (7-(((4,5-cis-dihydroxy-2-cyclopenten-1-yl)amino)methyl)-7-deazaguanosine). The sequence is that of Queuine tRNA-ribosyltransferase from Thermoanaerobacter pseudethanolicus (strain ATCC 33223 / 39E) (Clostridium thermohydrosulfuricum).